A 405-amino-acid chain; its full sequence is MEAVLRWITAGESHGPALVAILEGMVAGVEVTSEDISAQLARRRLGYGRGARMKFEADKVTMVGGVRHGRTMGGPVAIEVANSEWPKWTTVMSADPVDPAELADLARNAPLTRPRPGHADYSGMLKYNFDDARNVLERASARETAARVAAGTVARNFLRQALGVEVVSHVVAIGTAANTTGVVPTAADLATVDESPVRAFDAAAEAAMIAEIEAAKKDGDTLGGVVEVIVEGLPVGLGSFTSGENRLDSRLAAALMGIQAIKGVEVGDGFETARRRGSQAHDEMRPGPDGVLRSTNRAGGLEGGMTNGEPLRVRAAMKPISTVPRALATVDMTTGEEAVAIHQRSDVCAVPAAGVVAEAMVALVVAQAALEKFGGDSLTETVDNITSYVKRISTRPHVPADSRPQ.

Residues Arg-43 and Arg-49 each contribute to the NADP(+) site. Residues 138–140 (RAS) and 259–260 (QA) contribute to the FMN site. The span at 275–286 (RRGSQAHDEMRP) shows a compositional bias: basic and acidic residues. The segment at 275 to 308 (RRGSQAHDEMRPGPDGVLRSTNRAGGLEGGMTNG) is disordered. Residues Gly-303, 318–322 (KPIST), and Arg-344 each bind FMN.

This sequence belongs to the chorismate synthase family. As to quaternary structure, homotetramer. FMNH2 serves as cofactor.

It carries out the reaction 5-O-(1-carboxyvinyl)-3-phosphoshikimate = chorismate + phosphate. It functions in the pathway metabolic intermediate biosynthesis; chorismate biosynthesis; chorismate from D-erythrose 4-phosphate and phosphoenolpyruvate: step 7/7. Functionally, catalyzes the anti-1,4-elimination of the C-3 phosphate and the C-6 proR hydrogen from 5-enolpyruvylshikimate-3-phosphate (EPSP) to yield chorismate, which is the branch point compound that serves as the starting substrate for the three terminal pathways of aromatic amino acid biosynthesis. This reaction introduces a second double bond into the aromatic ring system. The polypeptide is Chorismate synthase (Nocardia farcinica (strain IFM 10152)).